We begin with the raw amino-acid sequence, 206 residues long: Thymidylate kinase (206 aa).

Residue 11–18 (GIDGAGKT) participates in ATP binding.

The protein belongs to the thymidylate kinase family.

It carries out the reaction dTMP + ATP = dTDP + ADP. Phosphorylation of dTMP to form dTDP in both de novo and salvage pathways of dTTP synthesis. The protein is Thymidylate kinase of Burkholderia lata (strain ATCC 17760 / DSM 23089 / LMG 22485 / NCIMB 9086 / R18194 / 383).